We begin with the raw amino-acid sequence, 225 residues long: Cytidylate kinase (225 aa).

ATP is bound at residue 11–19; that stretch reads GPAAAGKST.

This sequence belongs to the cytidylate kinase family. Type 1 subfamily.

The protein localises to the cytoplasm. The catalysed reaction is CMP + ATP = CDP + ADP. It catalyses the reaction dCMP + ATP = dCDP + ADP. This Bacillus cereus (strain ATCC 10987 / NRS 248) protein is Cytidylate kinase.